Consider the following 331-residue polypeptide: Glycine betaine/proline betaine-binding periplasmic protein (331 aa).

The signal sequence occupies residues 1–21; it reads MRHTVIFASAFATLVTASAFA. Residues Trp-86, His-90, and 161 to 163 contribute to the substrate site; that span reads WGC. Cysteines 157 and 163 form a disulfide.

As to quaternary structure, the complex is composed of two ATP-binding proteins (ProV), two transmembrane proteins (ProW) and a solute-binding protein (ProX).

It localises to the periplasm. Its function is as follows. Part of the ProU ABC transporter complex involved in glycine betaine and proline betaine uptake. Binds glycine betaine and proline betaine with high affinity. The protein is Glycine betaine/proline betaine-binding periplasmic protein (proX) of Salmonella typhimurium (strain LT2 / SGSC1412 / ATCC 700720).